A 237-amino-acid chain; its full sequence is Leucyl/phenylalanyl-tRNA--protein transferase (237 aa).

It belongs to the L/F-transferase family.

It is found in the cytoplasm. It catalyses the reaction N-terminal L-lysyl-[protein] + L-leucyl-tRNA(Leu) = N-terminal L-leucyl-L-lysyl-[protein] + tRNA(Leu) + H(+). The enzyme catalyses N-terminal L-arginyl-[protein] + L-leucyl-tRNA(Leu) = N-terminal L-leucyl-L-arginyl-[protein] + tRNA(Leu) + H(+). It carries out the reaction L-phenylalanyl-tRNA(Phe) + an N-terminal L-alpha-aminoacyl-[protein] = an N-terminal L-phenylalanyl-L-alpha-aminoacyl-[protein] + tRNA(Phe). In terms of biological role, functions in the N-end rule pathway of protein degradation where it conjugates Leu, Phe and, less efficiently, Met from aminoacyl-tRNAs to the N-termini of proteins containing an N-terminal arginine or lysine. The polypeptide is Leucyl/phenylalanyl-tRNA--protein transferase (aat) (Vibrio vulnificus (strain CMCP6)).